Here is a 423-residue protein sequence, read N- to C-terminus: Polyglutamylase complex subunit TTLL1 (423 aa).

Residues 1-367 (MAGRVKWVTD…NGEIPDCKWN (367 aa)) form the TTL domain. ATP is bound by residues lysine 138, 144-145 (QG), 181-184 (SLYI), and 194-196 (KFD). Glutamine 144 provides a ligand contact to a protein. Arginine 220 lines the L-glutamate pocket. 241-242 (TN) contacts ATP. Lysine 259 contacts L-glutamate. Aspartate 313, glutamate 326, and asparagine 328 together coordinate Mg(2+). Position 344 (lysine 344) interacts with L-glutamate. Positions 390–423 (DGAERELRSRPGQPVGPRTGRSRDSGRNVLTTWK) are disordered.

It belongs to the tubulin polyglutamylase family. Part of the neuronal tubulin polyglutamylase complex which contains TPGS1, TPGS2, TTLL1, LRRC49 and NICN1. Interacts with PCM1, CSTPP1 and LRRC49. Mg(2+) serves as cofactor.

It is found in the cytoplasm. The protein resides in the cytoskeleton. The protein localises to the cilium basal body. It localises to the cilium axoneme. Its subcellular location is the cell projection. It is found in the cilium. The protein resides in the flagellum. It carries out the reaction (L-glutamyl)(n)-gamma-L-glutamyl-L-glutamyl-[protein] + L-glutamate + ATP = (L-glutamyl)(n+1)-gamma-L-glutamyl-L-glutamyl-[protein] + ADP + phosphate + H(+). In terms of biological role, catalytic subunit of a polyglutamylase complex which modifies tubulin, generating side chains of glutamate on the gamma-carboxyl group of specific glutamate residues within the C-terminal tail of tubulin. Probably involved in the side-chain elongation step of the polyglutamylation reaction rather than the initiation step. Modifies both alpha- and beta-tubulins with a preference for the alpha-tail. Unlike most polyglutamylases of the tubulin--tyrosine ligase family, only displays a catalytic activity when in complex with other proteins as it is most likely lacking domains important for autonomous activity. Part of the neuronal tubulin polyglutamylase complex. Mediates cilia and flagella polyglutamylation which is essential for their biogenesis and motility. Involved in respiratory motile cilia function through the regulation of beating asymmetry. Essential for sperm flagella biogenesis, motility and male fertility. Involved in KLF4 glutamylation which impedes its ubiquitination, thereby leading to somatic cell reprogramming, pluripotency maintenance and embryogenesis. This is Polyglutamylase complex subunit TTLL1 (Ttll1) from Rattus norvegicus (Rat).